We begin with the raw amino-acid sequence, 252 residues long: MSDWNPSLYLHFAAERSRPAVELLARVPLENIEYVADLGCGPGNSTALLNQRWPAARITGIDSSPAMIAEARSALPDCQFVEADIRNWQPEQALDLIFANASLQWLPDHYELFPHLVSLLNPQGVLAVQMPDNWLEPTHVLMREVAWEQNYPDRGRESLAGIHAYYDILSEAGCEVDIWRTTYYHQMPSHQAIIDWVTATGLRPWLQDLAESEQQLFLTRYHQMLEEQYPLQENGQILLAFPRLFIVARRTE.

It belongs to the methyltransferase superfamily. Tam family.

It localises to the cytoplasm. The catalysed reaction is trans-aconitate + S-adenosyl-L-methionine = (E)-3-(methoxycarbonyl)pent-2-enedioate + S-adenosyl-L-homocysteine. In terms of biological role, catalyzes the S-adenosylmethionine monomethyl esterification of trans-aconitate. The chain is Trans-aconitate 2-methyltransferase from Escherichia coli (strain 55989 / EAEC).